The sequence spans 312 residues: Ribose-phosphate pyrophosphokinase (312 aa).

ATP is bound by residues 34-36 and 93-94; these read DQE and RQ. Positions 127 and 167 each coordinate Mg(2+). The active site involves Lys191. Residues Arg193, Asp217, and 221–225 contribute to the D-ribose 5-phosphate site; that span reads DSGGT.

The protein belongs to the ribose-phosphate pyrophosphokinase family. Class I subfamily. As to quaternary structure, homohexamer. It depends on Mg(2+) as a cofactor.

Its subcellular location is the cytoplasm. It carries out the reaction D-ribose 5-phosphate + ATP = 5-phospho-alpha-D-ribose 1-diphosphate + AMP + H(+). Its pathway is metabolic intermediate biosynthesis; 5-phospho-alpha-D-ribose 1-diphosphate biosynthesis; 5-phospho-alpha-D-ribose 1-diphosphate from D-ribose 5-phosphate (route I): step 1/1. Involved in the biosynthesis of the central metabolite phospho-alpha-D-ribosyl-1-pyrophosphate (PRPP) via the transfer of pyrophosphoryl group from ATP to 1-hydroxyl of ribose-5-phosphate (Rib-5-P). The protein is Ribose-phosphate pyrophosphokinase of Hyphomonas neptunium (strain ATCC 15444).